Consider the following 369-residue polypeptide: Cyclin-dependent kinase 5 activator 2 (369 aa).

A compositionally biased stretch (polar residues) spans 1–11 (MGTVLSLSPAS). Disordered regions lie at residues 1–55 (MGTV…SRLK), 72–176 (ASAK…SPRR), and 330–369 (EAAA…NLDR). A lipid anchor (N-myristoyl glycine) is attached at G2. Residues 74–84 (AKKKKGSKKVT) are compositionally biased toward basic residues. Position 84 is a phosphothreonine (T84). Residues 99–112 (RNRENLLRKGRDGP) are compositionally biased toward basic and acidic residues. Low complexity predominate over residues 122 to 144 (AVPVPTVPTTAATCEPPSGGSAA). Residues 145 to 171 (APPPGSGGGKPPPPPPPAPQAAPPAPG) show a composition bias toward pro residues. The span at 331 to 352 (AAASTGGPPSGSSASTTSSSSA) shows a compositional bias: low complexity.

This sequence belongs to the cyclin-dependent kinase 5 activator family. In terms of assembly, heterodimer of a catalytic subunit and a regulatory subunit. In terms of processing, myristoylated. The Gly-2-Ala mutant is absent of the cell periphery, suggesting that a proper myristoylation signal is essential for the proper distribution of CDK5R2 (p39).

It localises to the cell membrane. Its function is as follows. Activator of CDK5/TPKII. The polypeptide is Cyclin-dependent kinase 5 activator 2 (Cdk5r2) (Mus musculus (Mouse)).